We begin with the raw amino-acid sequence, 254 residues long: DNA repair protein RecO (254 aa).

This sequence belongs to the RecO family.

Its function is as follows. Involved in DNA repair and RecF pathway recombination. This is DNA repair protein RecO from Anaeromyxobacter dehalogenans (strain 2CP-1 / ATCC BAA-258).